The primary structure comprises 385 residues: Cytochrome b (385 aa).

The next 4 membrane-spanning stretches (helical) occupy residues 32–52 (FGSLLALCLGIQIVTGVTLAM), 76–98 (WLVRYLHANTASAFFFLVYLHIG), 113–133 (TWAIGTVILIVMMATAFLGYV), and 179–199 (FFALHFLLPFVLAALALMHLI). Heme b-binding residues include H82 and H96. Heme b is bound by residues H183 and H197. H202 serves as a coordination point for a ubiquinone. Transmembrane regions (helical) follow at residues 226-246 (FIFKDLVTIFIFFIVLSIFVF), 290-310 (LLGVIAMFSAILALMVMPITD), 322-342 (LSKVAFYIFVANFLVLMQIGA), and 349-369 (FIELGQISTVLYFAHFFVIVP).

Belongs to the cytochrome b family. As to quaternary structure, fungal cytochrome b-c1 complex contains 10 subunits; 3 respiratory subunits, 2 core proteins and 5 low-molecular weight proteins. Cytochrome b-c1 complex is a homodimer. It depends on heme b as a cofactor.

It is found in the mitochondrion inner membrane. Component of the ubiquinol-cytochrome c reductase complex (complex III or cytochrome b-c1 complex) that is part of the mitochondrial respiratory chain. The b-c1 complex mediates electron transfer from ubiquinol to cytochrome c. Contributes to the generation of a proton gradient across the mitochondrial membrane that is then used for ATP synthesis. In Aspergillus tubingensis, this protein is Cytochrome b (cob).